A 369-amino-acid polypeptide reads, in one-letter code: Microtubule-associated protein 6 homolog (369 aa).

2 disordered regions span residues 41-213 (LPAQ…AADA) and 251-369 (AQYK…EAKE). The segment covering 70–80 (APGPARPGTAP) has biased composition (low complexity). Mn stretches follow at residues 87–110 (DSVMRHDYKPWKVQRPEPSCKPKS) and 122–145 (ETQYQKDFRAWPIPKRGDHPWIPK). 3 stretches are compositionally biased toward basic and acidic residues: residues 89–110 (VMRHDYKPWKVQRPEPSCKPKS), 118–142 (PFEKETQYQKDFRAWPIPKRGDHPW), and 179–209 (EHPKAARPGDAREKGRQRGDEAGGQEGRGRA). Positions 228 to 251 (SSSYRNEFRPWIDVKPVKAIKAKA) are mn 3. The segment covering 297 to 308 (PYKEPPKVEKPS) has biased composition (basic and acidic residues). The segment covering 312-328 (SKPKKTTTSHKPLKKAK) has biased composition (basic residues). Basic and acidic residues predominate over residues 350 to 369 (KPEDKEKSKEMNNKLAEAKE).

Belongs to the STOP family.

It localises to the cytoplasm. Its subcellular location is the cytoskeleton. Functionally, involved in microtubule stabilization in many cell types, including neuronal cells. Specifically has microtubule cold stabilizing activity. Involved in dendrite morphogenesis and maintenance by regulating lysosomal trafficking. The protein is Microtubule-associated protein 6 homolog (MAP6) of Gallus gallus (Chicken).